The chain runs to 275 residues: T-cell ecto-ADP-ribosyltransferase 2 (275 aa).

The first 20 residues, 1–20, serve as a signal peptide directing secretion; that stretch reads MPSNICKFFLTWWLIQQVTG. 2 disulfide bridges follow: cysteine 41–cysteine 243 and cysteine 141–cysteine 193. A TR mART core domain is found at 61-238; the sequence is AKLKVAWEEA…IFLDSPKRKK (178 aa). Residues tyrosine 98, arginine 146, and glutamine 164 each coordinate NAD(+). Residue arginine 146 is part of the active site. Serine 167 is an active-site residue. Residue serine 202 participates in NAD(+) binding. Arginine 204 is subject to ADP-ribosylarginine; by autocatalysis. The active site involves glutamate 209. A lipid anchor (GPI-anchor amidated serine) is attached at serine 246. The propeptide at 247-275 is removed in mature form; sequence SAGARESCVSLFLVVLPSLLVQLLCLAEP.

Belongs to the Arg-specific ADP-ribosyltransferase family. As to expression, postthymic T-cells.

It is found in the cell membrane. The catalysed reaction is L-arginyl-[protein] + NAD(+) = N(omega)-(ADP-D-ribosyl)-L-arginyl-[protein] + nicotinamide + H(+). The enzyme catalyses NAD(+) + H2O = ADP-D-ribose + nicotinamide + H(+). Its function is as follows. Has both NAD(+) glycohydrolase and ADP-ribosyltransferase activity (to a lesser extent). The polypeptide is T-cell ecto-ADP-ribosyltransferase 2 (Art2b) (Rattus norvegicus (Rat)).